We begin with the raw amino-acid sequence, 344 residues long: uncharacterized protein (344 aa).

The signal sequence occupies residues 1 to 20; that stretch reads MEIRIMLFILMMMVMPVSYA.

This sequence belongs to the fimbrial protein family.

Its function is as follows. Part of the yehABCD fimbrial operon. Could contribute to adhesion to various surfaces in specific environmental niches. This is an uncharacterized protein from Escherichia coli (strain K12).